The chain runs to 292 residues: Protease HtpX homolog (292 aa).

Transmembrane regions (helical) follow at residues 4–24 and 42–62; these read IFLF…TLRL and ALLV…LAMS. Residue His147 participates in Zn(2+) binding. Residue Glu148 is part of the active site. His151 provides a ligand contact to Zn(2+). 2 consecutive transmembrane segments (helical) span residues 158–178 and 198–218; these read VTLA…SRII and FVTS…IVMW. Glu224 serves as a coordination point for Zn(2+).

Belongs to the peptidase M48B family. Requires Zn(2+) as cofactor.

It is found in the cell inner membrane. The polypeptide is Protease HtpX homolog (Nitrosomonas eutropha (strain DSM 101675 / C91 / Nm57)).